We begin with the raw amino-acid sequence, 209 residues long: Probable nicotinate-nucleotide adenylyltransferase (209 aa).

Belongs to the NadD family.

The enzyme catalyses nicotinate beta-D-ribonucleotide + ATP + H(+) = deamido-NAD(+) + diphosphate. It participates in cofactor biosynthesis; NAD(+) biosynthesis; deamido-NAD(+) from nicotinate D-ribonucleotide: step 1/1. Its function is as follows. Catalyzes the reversible adenylation of nicotinate mononucleotide (NaMN) to nicotinic acid adenine dinucleotide (NaAD). This is Probable nicotinate-nucleotide adenylyltransferase from Shewanella woodyi (strain ATCC 51908 / MS32).